The sequence spans 390 residues: Ribonuclease D (390 aa).

The 3'-5' exonuclease domain occupies 7-173 (ITDSATLAAL…TLFPMLLKEL (167 aa)). Residues 212-293 (KADILGRLKA…ENAEALRPEE (82 aa)) enclose the HRDC domain.

Belongs to the RNase D family. A divalent metal cation serves as cofactor.

It localises to the cytoplasm. It catalyses the reaction Exonucleolytic cleavage that removes extra residues from the 3'-terminus of tRNA to produce 5'-mononucleotides.. In terms of biological role, exonuclease involved in the 3' processing of various precursor tRNAs. Initiates hydrolysis at the 3'-terminus of an RNA molecule and releases 5'-mononucleotides. This chain is Ribonuclease D, found in Zymomonas mobilis subsp. mobilis (strain ATCC 31821 / ZM4 / CP4).